The primary structure comprises 519 residues: Membrane-bound glycerophospholipid O-acyltransferase 2 (519 aa).

The next 6 membrane-spanning stretches (helical) occupy residues 22–42 (PIDQ…AVWF), 61–81 (TLLG…HFLV), 88–108 (CIMI…FALG), 184–204 (FMGI…FIEG), 236–256 (LLVC…LPVE), and 263–283 (FQAT…LLAA). Residues Asn341 and His372 contribute to the active site. Transmembrane regions (helical) follow at residues 365-385 (FFLS…FLTG), 415-435 (LITW…FVLL), and 443-463 (FYSS…LLLP). Residues 497–519 (FSTMNNVCNQNRDTGSRHSSLTQ) form a disordered region.

The protein belongs to the membrane-bound acyltransferase family. As to expression, highly expressed in epididymis, brain, testis, and ovary.

The protein localises to the endoplasmic reticulum membrane. The catalysed reaction is a 1-acyl-sn-glycero-3-phosphocholine + an acyl-CoA = a 1,2-diacyl-sn-glycero-3-phosphocholine + CoA. It carries out the reaction a 1-acyl-sn-glycero-3-phosphoethanolamine + an acyl-CoA = a 1,2-diacyl-sn-glycero-3-phosphoethanolamine + CoA. The enzyme catalyses a 1-O-(1Z-alkenyl)-sn-glycero-3-phosphocholine + (9Z)-octadecenoyl-CoA = 1-O-(1Z)-alkenyl-2-(9Z)-octadecenoyl-sn-glycero-3-phosphocholine + CoA. It catalyses the reaction a 1-O-(1Z-alkenyl)-sn-glycero-3-phosphoethanolamine + (9Z)-octadecenoyl-CoA = 1-O-(1Z)-alkenyl-2-(9Z)-octadecenoyl-sn-glycero-3-phosphoethanolamine + CoA. The catalysed reaction is 1-octadecanoyl-sn-glycero-3-phosphoethanolamine + (9Z)-octadecenoyl-CoA = 1-octadecanoyl-2-(9Z-octadecenoyl)-sn-glycero-3-phosphoethanolamine + CoA. It carries out the reaction 1-octadecanoyl-sn-glycero-3-phosphocholine + (9Z)-octadecenoyl-CoA = 1-octadecanoyl-2-(9Z-octadecenoyl)-sn-glycero-3-phosphocholine + CoA. The enzyme catalyses 1-(9Z-octadecenoyl)-sn-glycero-3-phosphoethanolamine + (9Z)-octadecenoyl-CoA = 1,2-di-(9Z-octadecenoyl)-sn-glycero-3-phosphoethanolamine + CoA. It catalyses the reaction 1-hexadecanoyl-sn-glycero-3-phosphoethanolamine + (9Z)-octadecenoyl-CoA = 1-hexadecanoyl-2-(9Z-octadecenoyl)-sn-glycero-3-phosphoethanolamine + CoA. The catalysed reaction is 1-hexadecanoyl-sn-glycero-3-phosphocholine + (9Z)-octadecenoyl-CoA = 1-hexadecanoyl-2-(9Z-octadecenoyl)-sn-glycero-3-phosphocholine + CoA. It carries out the reaction (9Z)-hexadecenoyl-CoA + 1-hexadecanoyl-sn-glycero-3-phosphocholine = 1-hexadecanoyl-2-(9Z-hexadecenoyl)-sn-glycero-3-phosphocholine + CoA. The enzyme catalyses 1-hexadecanoyl-sn-glycero-3-phosphoethanolamine + (9Z)-hexadecenoyl-CoA = 1-hexadecanoyl-2-(9Z)-hexadecenoyl-sn-glycero-3-phosphoethanolamine + CoA. It catalyses the reaction (9Z,12Z)-octadecadienoyl-CoA + 1-hexadecanoyl-sn-glycero-3-phosphocholine = 1-hexadecanoyl-2-(9Z,12Z-octadecadienoyl)-sn-glycero-3-phosphocholine + CoA. It functions in the pathway lipid metabolism; phospholipid metabolism. Partially inhibited by thimerosal. Its function is as follows. Acyltransferase which catalyzes the transfer of an acyl group from an acyl-CoA to a lysophospholipid leading to the production of a phospholipid and participates in the reacylation step of the phospholipid remodeling pathway also known as the Lands cycle. Catalyzes the acylation of lysophosphatidylcholine (1-acyl-sn-glycero-3-phosphocholine or LPC) and to a lesser extend lysophosphatidylethanolamine (1-acyl-sn-glycero-3-phosphoethanolamine or LPE). Does not acylates lysophosphatidic acid (LPA) and lysophosphatidylserine. Prefers oleoyl-CoA as the acyl donor. May be involved in chondrocyte differentiation. This chain is Membrane-bound glycerophospholipid O-acyltransferase 2, found in Mus musculus (Mouse).